A 225-amino-acid polypeptide reads, in one-letter code: Germin-like protein 8-6 (225 aa).

An N-terminal signal peptide occupies residues 1 to 23; that stretch reads MASPSSLCLLTALLALVSWQTIA. A disulfide bridge connects residues cysteine 33 and cysteine 48. One can recognise a Cupin type-1 domain in the interval 63-213; it reads AMLDTPRKTN…AFQVEKGTID (151 aa). N-linked (GlcNAc...) asparagine glycosylation occurs at asparagine 77. Mn(2+)-binding residues include histidine 110, histidine 112, and glutamate 117. N-linked (GlcNAc...) asparagine glycosylation is present at asparagine 136. Mn(2+) is bound at residue histidine 158.

Belongs to the germin family. In terms of assembly, oligomer (believed to be a pentamer but probably hexamer).

It is found in the secreted. Its subcellular location is the extracellular space. The protein resides in the apoplast. In terms of biological role, plays a role in broad-spectrum disease resistance. Probably has no oxalate oxidase activity even if the active site is conserved. This chain is Germin-like protein 8-6, found in Oryza sativa subsp. japonica (Rice).